We begin with the raw amino-acid sequence, 405 residues long: PP2A regulatory subunit TAP46 (405 aa).

2 disordered regions span residues 159-189 (ERRG…SEEE) and 352-405 (ATTS…TPCG). Over residues 165–174 (TKASALSTPV) the composition is skewed to polar residues. Composition is skewed to acidic residues over residues 176-189 (SGED…SEEE) and 367-377 (EDEEDDDEDEE). The span at 378–393 (AVMKARAFDDWKDDNP) shows a compositional bias: basic and acidic residues.

This sequence belongs to the IGBP1/TAP42 family. In terms of assembly, interacts with the 36 kDa catalytic subunit (subunit C) of PP2A. Interacts with PP2A1 and PP2A2. Interacts with PP2A3, PPX1 and FYPP1. Interacts with FYPP3 and ABI5. Interacts with ATPK1/S6K1 and ATPK2/S6K2. Interacts with TIP41L. Phosphorylated by TOR kinase in vitro. In terms of tissue distribution, ubiquitous. Highly expressed in seed, and particularly in the embryo.

Functionally, involved in the positive regulation of the TOR signaling pathway. Acts as a negative regulator of PP2A catalytic activity. Plays a positive role in the ABA-regulated inhibition of germination, probably throught its interaction with ABI5. The sequence is that of PP2A regulatory subunit TAP46 from Arabidopsis thaliana (Mouse-ear cress).